A 271-amino-acid polypeptide reads, in one-letter code: Ribosomal RNA small subunit methyltransferase A (271 aa).

Residues Leu-20, Gly-45, Glu-66, Asp-90, and Asn-112 each coordinate S-adenosyl-L-methionine.

The protein belongs to the class I-like SAM-binding methyltransferase superfamily. rRNA adenine N(6)-methyltransferase family. RsmA subfamily.

It localises to the cytoplasm. It catalyses the reaction adenosine(1518)/adenosine(1519) in 16S rRNA + 4 S-adenosyl-L-methionine = N(6)-dimethyladenosine(1518)/N(6)-dimethyladenosine(1519) in 16S rRNA + 4 S-adenosyl-L-homocysteine + 4 H(+). Its function is as follows. Specifically dimethylates two adjacent adenosines (A1518 and A1519) in the loop of a conserved hairpin near the 3'-end of 16S rRNA in the 30S particle. May play a critical role in biogenesis of 30S subunits. In Blochmanniella floridana, this protein is Ribosomal RNA small subunit methyltransferase A.